Here is a 303-residue protein sequence, read N- to C-terminus: Oxygen-dependent coproporphyrinogen-III oxidase (303 aa).

Serine 94 is a substrate binding site. Residues histidine 98 and histidine 108 each contribute to the a divalent metal cation site. Residue histidine 108 is the Proton donor of the active site. Substrate is bound at residue 110-112 (NVR). Residues histidine 147 and histidine 177 each coordinate a divalent metal cation. The tract at residues 242–277 (YVEFNLVYDRGTLFGLQTGGRTESILMSLPPLVRWE) is important for dimerization. 260 to 262 (GGR) lines the substrate pocket.

This sequence belongs to the aerobic coproporphyrinogen-III oxidase family. Homodimer. Requires a divalent metal cation as cofactor.

It localises to the cytoplasm. The enzyme catalyses coproporphyrinogen III + O2 + 2 H(+) = protoporphyrinogen IX + 2 CO2 + 2 H2O. Its pathway is porphyrin-containing compound metabolism; protoporphyrin-IX biosynthesis; protoporphyrinogen-IX from coproporphyrinogen-III (O2 route): step 1/1. Functionally, involved in the heme biosynthesis. Catalyzes the aerobic oxidative decarboxylation of propionate groups of rings A and B of coproporphyrinogen-III to yield the vinyl groups in protoporphyrinogen-IX. The sequence is that of Oxygen-dependent coproporphyrinogen-III oxidase from Saccharophagus degradans (strain 2-40 / ATCC 43961 / DSM 17024).